A 356-amino-acid chain; its full sequence is Phospho-N-acetylmuramoyl-pentapeptide-transferase (356 aa).

A run of 10 helical transmembrane segments spans residues 27–47 (AAVA…ILML), 73–93 (TMGG…WMDL), 97–117 (FVWA…LDDY), 134–154 (LLVE…RTGT), 163–183 (GIVI…IVGF), 195–215 (GLAT…VYLS), 232–252 (AGEL…FLWF), 258–278 (AVFM…TIAV), 285–305 (VLVL…IQVF), and 333–353 (TVVI…LATL).

It belongs to the glycosyltransferase 4 family. MraY subfamily. It depends on Mg(2+) as a cofactor.

The protein resides in the cell inner membrane. It catalyses the reaction UDP-N-acetyl-alpha-D-muramoyl-L-alanyl-gamma-D-glutamyl-meso-2,6-diaminopimeloyl-D-alanyl-D-alanine + di-trans,octa-cis-undecaprenyl phosphate = di-trans,octa-cis-undecaprenyl diphospho-N-acetyl-alpha-D-muramoyl-L-alanyl-D-glutamyl-meso-2,6-diaminopimeloyl-D-alanyl-D-alanine + UMP. The protein operates within cell wall biogenesis; peptidoglycan biosynthesis. Catalyzes the initial step of the lipid cycle reactions in the biosynthesis of the cell wall peptidoglycan: transfers peptidoglycan precursor phospho-MurNAc-pentapeptide from UDP-MurNAc-pentapeptide onto the lipid carrier undecaprenyl phosphate, yielding undecaprenyl-pyrophosphoryl-MurNAc-pentapeptide, known as lipid I. This Sphingopyxis alaskensis (strain DSM 13593 / LMG 18877 / RB2256) (Sphingomonas alaskensis) protein is Phospho-N-acetylmuramoyl-pentapeptide-transferase.